The chain runs to 460 residues: Chromosomal replication initiator protein DnaA 1 (460 aa).

The tract at residues 1–68 (MRAWEEFLLL…KSGLVNNNNK (68 aa)) is domain I, interacts with DnaA modulators. A domain II region spans residues 68 to 102 (KPIRVHVTSVDKAAPFYKEKQMQQEKTAYFTMHYG). The segment at 103–321 (SVNPEMTFSN…HALNLLAKRV (219 aa)) is domain III, AAA+ region. G151, G153, K154, and T155 together coordinate ATP. Positions 322–460 (MYKKLSHQLL…EFFPSEEMII (139 aa)) are domain IV, binds dsDNA.

This sequence belongs to the DnaA family. In terms of assembly, oligomerizes as a right-handed, spiral filament on DNA at oriC.

The protein localises to the cytoplasm. Functionally, plays an essential role in the initiation and regulation of chromosomal replication. ATP-DnaA binds to the origin of replication (oriC) to initiate formation of the DNA replication initiation complex once per cell cycle. Binds the DnaA box (a 9 base pair repeat at the origin) and separates the double-stranded (ds)DNA. Forms a right-handed helical filament on oriC DNA; dsDNA binds to the exterior of the filament while single-stranded (ss)DNA is stabiized in the filament's interior. The ATP-DnaA-oriC complex binds and stabilizes one strand of the AT-rich DNA unwinding element (DUE), permitting loading of DNA polymerase. After initiation quickly degrades to an ADP-DnaA complex that is not apt for DNA replication. Binds acidic phospholipids. The sequence is that of Chromosomal replication initiator protein DnaA 1 from Chlamydia pneumoniae (Chlamydophila pneumoniae).